We begin with the raw amino-acid sequence, 257 residues long: Glutamate racemase (257 aa).

Residues 12–13 (DS) and 44–45 (YG) each bind substrate. Cysteine 75 acts as the Proton donor/acceptor in catalysis. 76–77 (NT) lines the substrate pocket. Cysteine 185 (proton donor/acceptor) is an active-site residue. 186–187 (TH) serves as a coordination point for substrate.

The protein belongs to the aspartate/glutamate racemases family.

The catalysed reaction is L-glutamate = D-glutamate. The protein operates within cell wall biogenesis; peptidoglycan biosynthesis. Its function is as follows. Provides the (R)-glutamate required for cell wall biosynthesis. This chain is Glutamate racemase, found in Clostridium botulinum (strain 657 / Type Ba4).